The primary structure comprises 350 residues: Holliday junction branch migration complex subunit RuvB (350 aa).

The interval 1–184 is large ATPase domain (RuvB-L); it reads MSKTPERLVT…FGIPIRLEFY (184 aa). Residues L23, R24, G65, K68, T69, T70, 131-133, R174, Y184, and R221 each bind ATP; that span reads EDF. Residue T69 participates in Mg(2+) binding. The interval 185-255 is small ATPAse domain (RuvB-S); it reads TIEELERIVL…LADKALSLLD (71 aa). The head domain (RuvB-H) stretch occupies residues 258–350; the sequence is PIGLDQMDRR…GLFPDQSEED (93 aa). DNA-binding residues include R294, R313, and R318.

Belongs to the RuvB family. As to quaternary structure, homohexamer. Forms an RuvA(8)-RuvB(12)-Holliday junction (HJ) complex. HJ DNA is sandwiched between 2 RuvA tetramers; dsDNA enters through RuvA and exits via RuvB. An RuvB hexamer assembles on each DNA strand where it exits the tetramer. Each RuvB hexamer is contacted by two RuvA subunits (via domain III) on 2 adjacent RuvB subunits; this complex drives branch migration. In the full resolvosome a probable DNA-RuvA(4)-RuvB(12)-RuvC(2) complex forms which resolves the HJ.

The protein localises to the cytoplasm. The catalysed reaction is ATP + H2O = ADP + phosphate + H(+). Its function is as follows. The RuvA-RuvB-RuvC complex processes Holliday junction (HJ) DNA during genetic recombination and DNA repair, while the RuvA-RuvB complex plays an important role in the rescue of blocked DNA replication forks via replication fork reversal (RFR). RuvA specifically binds to HJ cruciform DNA, conferring on it an open structure. The RuvB hexamer acts as an ATP-dependent pump, pulling dsDNA into and through the RuvAB complex. RuvB forms 2 homohexamers on either side of HJ DNA bound by 1 or 2 RuvA tetramers; 4 subunits per hexamer contact DNA at a time. Coordinated motions by a converter formed by DNA-disengaged RuvB subunits stimulates ATP hydrolysis and nucleotide exchange. Immobilization of the converter enables RuvB to convert the ATP-contained energy into a lever motion, pulling 2 nucleotides of DNA out of the RuvA tetramer per ATP hydrolyzed, thus driving DNA branch migration. The RuvB motors rotate together with the DNA substrate, which together with the progressing nucleotide cycle form the mechanistic basis for DNA recombination by continuous HJ branch migration. Branch migration allows RuvC to scan DNA until it finds its consensus sequence, where it cleaves and resolves cruciform DNA. In Beijerinckia indica subsp. indica (strain ATCC 9039 / DSM 1715 / NCIMB 8712), this protein is Holliday junction branch migration complex subunit RuvB.